The primary structure comprises 291 residues: ATP synthase gamma chain (291 aa).

The protein belongs to the ATPase gamma chain family. As to quaternary structure, F-type ATPases have 2 components, CF(1) - the catalytic core - and CF(0) - the membrane proton channel. CF(1) has five subunits: alpha(3), beta(3), gamma(1), delta(1), epsilon(1). CF(0) has three main subunits: a, b and c.

It localises to the cell inner membrane. In terms of biological role, produces ATP from ADP in the presence of a proton gradient across the membrane. The gamma chain is believed to be important in regulating ATPase activity and the flow of protons through the CF(0) complex. In Burkholderia cenocepacia (strain ATCC BAA-245 / DSM 16553 / LMG 16656 / NCTC 13227 / J2315 / CF5610) (Burkholderia cepacia (strain J2315)), this protein is ATP synthase gamma chain.